Reading from the N-terminus, the 316-residue chain is Pantothenate kinase (316 aa).

95–102 is a binding site for ATP; the sequence is GSVAVGKS.

Belongs to the prokaryotic pantothenate kinase family.

The protein resides in the cytoplasm. The catalysed reaction is (R)-pantothenate + ATP = (R)-4'-phosphopantothenate + ADP + H(+). Its pathway is cofactor biosynthesis; coenzyme A biosynthesis; CoA from (R)-pantothenate: step 1/5. The protein is Pantothenate kinase of Salmonella gallinarum (strain 287/91 / NCTC 13346).